The sequence spans 121 residues: Large ribosomal subunit protein eL18 (121 aa).

The protein belongs to the eukaryotic ribosomal protein eL18 family. In terms of assembly, part of the 50S ribosomal subunit.

The protein is Large ribosomal subunit protein eL18 of Thermococcus kodakarensis (strain ATCC BAA-918 / JCM 12380 / KOD1) (Pyrococcus kodakaraensis (strain KOD1)).